Here is a 501-residue protein sequence, read N- to C-terminus: Glutamate--tRNA ligase (501 aa).

The 'HIGH' region signature appears at 10–20 (PSPTGSLHIGG). The short motif at 251–255 (KLSKR) is the 'KMSKS' region element. Residue Lys-254 participates in ATP binding.

Belongs to the class-I aminoacyl-tRNA synthetase family. Glutamate--tRNA ligase type 1 subfamily. As to quaternary structure, monomer.

The protein resides in the cytoplasm. It catalyses the reaction tRNA(Glu) + L-glutamate + ATP = L-glutamyl-tRNA(Glu) + AMP + diphosphate. Functionally, catalyzes the attachment of glutamate to tRNA(Glu) in a two-step reaction: glutamate is first activated by ATP to form Glu-AMP and then transferred to the acceptor end of tRNA(Glu). This chain is Glutamate--tRNA ligase, found in Desulforudis audaxviator (strain MP104C).